Reading from the N-terminus, the 488-residue chain is N-succinylglutamate 5-semialdehyde dehydrogenase (488 aa).

221-226 contacts NAD(+); sequence GSSRTG. Active-site residues include Glu244 and Cys278.

This sequence belongs to the aldehyde dehydrogenase family. AstD subfamily.

It catalyses the reaction N-succinyl-L-glutamate 5-semialdehyde + NAD(+) + H2O = N-succinyl-L-glutamate + NADH + 2 H(+). Its pathway is amino-acid degradation; L-arginine degradation via AST pathway; L-glutamate and succinate from L-arginine: step 4/5. Catalyzes the NAD-dependent reduction of succinylglutamate semialdehyde into succinylglutamate. This chain is N-succinylglutamate 5-semialdehyde dehydrogenase, found in Pseudomonas fluorescens (strain ATCC BAA-477 / NRRL B-23932 / Pf-5).